Reading from the N-terminus, the 379-residue chain is Alcohol dehydrogenase class-3 (379 aa).

Cys-47, His-69, Cys-99, Cys-102, Cys-105, Cys-113, and Cys-176 together coordinate Zn(2+).

The protein belongs to the zinc-containing alcohol dehydrogenase family. Class-III subfamily. As to quaternary structure, homodimer. Requires Zn(2+) as cofactor.

The protein resides in the cytoplasm. The catalysed reaction is a primary alcohol + NAD(+) = an aldehyde + NADH + H(+). The enzyme catalyses a secondary alcohol + NAD(+) = a ketone + NADH + H(+). It carries out the reaction S-(hydroxymethyl)glutathione + NADP(+) = S-formylglutathione + NADPH + H(+). It catalyses the reaction S-(hydroxymethyl)glutathione + NAD(+) = S-formylglutathione + NADH + H(+). In terms of biological role, class-III ADH is remarkably ineffective in oxidizing ethanol, but it readily catalyzes the oxidation of long-chain primary alcohols and the oxidation of S-(hydroxymethyl) glutathione. The chain is Alcohol dehydrogenase class-3 (adh5) from Dictyostelium discoideum (Social amoeba).